The primary structure comprises 129 residues: Small ribosomal subunit protein uS11 (129 aa).

The protein belongs to the universal ribosomal protein uS11 family. In terms of assembly, part of the 30S ribosomal subunit. Interacts with proteins S7 and S18. Binds to IF-3.

Its function is as follows. Located on the platform of the 30S subunit, it bridges several disparate RNA helices of the 16S rRNA. Forms part of the Shine-Dalgarno cleft in the 70S ribosome. This is Small ribosomal subunit protein uS11 from Enterococcus faecalis (strain ATCC 700802 / V583).